Reading from the N-terminus, the 236-residue chain is Uridylate kinase (236 aa).

10–13 (KLSG) is an ATP binding site. G52 is a UMP binding site. The ATP site is built by G53 and R57. Residues D72 and 133–140 (TGNPFFTT) contribute to the UMP site. ATP contacts are provided by T160, Y166, and D169.

This sequence belongs to the UMP kinase family. As to quaternary structure, homohexamer.

It localises to the cytoplasm. The enzyme catalyses UMP + ATP = UDP + ADP. The protein operates within pyrimidine metabolism; CTP biosynthesis via de novo pathway; UDP from UMP (UMPK route): step 1/1. With respect to regulation, inhibited by UTP. In terms of biological role, catalyzes the reversible phosphorylation of UMP to UDP. The protein is Uridylate kinase of Polaromonas naphthalenivorans (strain CJ2).